A 91-amino-acid chain; its full sequence is Sm-like protein LSM36B (91 aa).

The region spanning Thr-14–Thr-86 is the Sm domain.

The protein belongs to the snRNP Sm proteins family. In terms of assembly, component of the heptameric LSM1-LSM7 complex that forms a seven-membered ring structure with a donut shape. The LSM subunits are arranged in the order LSM1, LSM2, LSM3, LSM6, LSM5, LSM7 and LSM4. Component of the heptameric LSM2-LSM8 complex that forms a seven-membered ring structure with a donut shape. The LSM subunits are arranged in the order LSM8, LSM2, LSM3, LSM6, LSM5, LSM7 and LSM4. LSM6B subunit interacts only with its two neighboring subunits, LSM3A or LSM3B and LSM5. In terms of tissue distribution, expressed in roots, leaves, stems, flowers and siliques.

The protein resides in the cytoplasm. It is found in the nucleus. Component of LSM protein complexes, which are involved in RNA processing. Component of the cytoplasmic LSM1-LSM7 complex which is involved in mRNA degradation by promoting decapping and leading to accurate 5'-3' mRNA decay. The cytoplasmic LSM1-LSM7 complex regulates developmental gene expression by the decapping of specific development-related transcripts. Component of the nuclear LSM2-LSM8 complex which is involved splicing nuclear mRNAs. LSM2-LSM8 binds directly to the U6 small nuclear RNAs (snRNAs) and is essential for accurate splicing of selected development-related mRNAs through the stabilization of the spliceosomal U6 snRNA. Plays a critical role in the regulation of development-related gene expression. The chain is Sm-like protein LSM36B from Arabidopsis thaliana (Mouse-ear cress).